Consider the following 371-residue polypeptide: Phospho-N-acetylmuramoyl-pentapeptide-transferase (371 aa).

The next 9 membrane-spanning stretches (helical) occupy residues 25–45, 77–94, 136–156, 172–192, 204–224, 240–260, 269–289, 296–316, and 348–368; these read TLLA…WLIA, MGGL…ALWA, IGWQ…HPAS, LIPH…IVGF, GLAI…AYVA, GTGE…AFLW, FMGD…AFMI, VIVG…VGVF, and KVVL…LATL.

Belongs to the glycosyltransferase 4 family. MraY subfamily. The cofactor is Mg(2+).

The protein localises to the cell inner membrane. The enzyme catalyses UDP-N-acetyl-alpha-D-muramoyl-L-alanyl-gamma-D-glutamyl-meso-2,6-diaminopimeloyl-D-alanyl-D-alanine + di-trans,octa-cis-undecaprenyl phosphate = di-trans,octa-cis-undecaprenyl diphospho-N-acetyl-alpha-D-muramoyl-L-alanyl-D-glutamyl-meso-2,6-diaminopimeloyl-D-alanyl-D-alanine + UMP. It participates in cell wall biogenesis; peptidoglycan biosynthesis. Catalyzes the initial step of the lipid cycle reactions in the biosynthesis of the cell wall peptidoglycan: transfers peptidoglycan precursor phospho-MurNAc-pentapeptide from UDP-MurNAc-pentapeptide onto the lipid carrier undecaprenyl phosphate, yielding undecaprenyl-pyrophosphoryl-MurNAc-pentapeptide, known as lipid I. This is Phospho-N-acetylmuramoyl-pentapeptide-transferase from Opitutus terrae (strain DSM 11246 / JCM 15787 / PB90-1).